The chain runs to 1045 residues: Extracellular serine protease (1045 aa).

Positions 1–27 (MILNKKLKLAYCVFLGCYGLSLHSSLA) are cleaved as a signal peptide. The 348-residue stretch at 49-396 (QWGLEAISAE…WGRVNLRDAI (348 aa)) folds into the Peptidase S8 domain. Active-site charge relay system residues include D76, H112, and S341. Residues 646–1045 (SLASTENDKE…SVNAGLTWRF (400 aa)) constitute a propeptide that is removed on maturation. The region spanning 769–1045 (IKADDNGAWA…SVNAGLTWRF (277 aa)) is the Autotransporter domain.

This sequence belongs to the peptidase S8 family.

It localises to the secreted. This chain is Extracellular serine protease, found in Serratia marcescens.